Here is a 194-residue protein sequence, read N- to C-terminus: Small ribosomal subunit protein uS4c (194 aa).

The segment at 1-29 (RFKKIRRLGTLPGLTSKRPRSGSDLKNPL) is disordered. Residues 82 to 143 (MRLDNILFRL…KQRSKALIQN (62 aa)) enclose the S4 RNA-binding domain.

The protein belongs to the universal ribosomal protein uS4 family. As to quaternary structure, part of the 30S ribosomal subunit. Contacts protein S5. The interaction surface between S4 and S5 is involved in control of translational fidelity.

It is found in the plastid. It localises to the chloroplast. Functionally, one of the primary rRNA binding proteins, it binds directly to 16S rRNA where it nucleates assembly of the body of the 30S subunit. With S5 and S12 plays an important role in translational accuracy. This chain is Small ribosomal subunit protein uS4c (rps4), found in Furcraea foetida (Mauritius hemp).